Here is a 449-residue protein sequence, read N- to C-terminus: Chromosomal replication initiator protein DnaA (449 aa).

Residues Met-1–Gln-73 are domain I, interacts with DnaA modulators. The interval Gln-73–Pro-109 is domain II. Polar residues predominate over residues Thr-90–Arg-103. A disordered region spans residues Thr-90 to Glu-110. The tract at residues Glu-110–Ile-326 is domain III, AAA+ region. Residues Gly-154, Gly-156, Lys-157, and Thr-158 each contribute to the ATP site. Residues Ala-327–Leu-449 form a domain IV, binds dsDNA region.

It belongs to the DnaA family. As to quaternary structure, oligomerizes as a right-handed, spiral filament on DNA at oriC.

Its subcellular location is the cytoplasm. In terms of biological role, plays an essential role in the initiation and regulation of chromosomal replication. ATP-DnaA binds to the origin of replication (oriC) to initiate formation of the DNA replication initiation complex once per cell cycle. Binds the DnaA box (a 9 base pair repeat at the origin) and separates the double-stranded (ds)DNA. Forms a right-handed helical filament on oriC DNA; dsDNA binds to the exterior of the filament while single-stranded (ss)DNA is stabiized in the filament's interior. The ATP-DnaA-oriC complex binds and stabilizes one strand of the AT-rich DNA unwinding element (DUE), permitting loading of DNA polymerase. After initiation quickly degrades to an ADP-DnaA complex that is not apt for DNA replication. Binds acidic phospholipids. This Picosynechococcus sp. (strain ATCC 27264 / PCC 7002 / PR-6) (Agmenellum quadruplicatum) protein is Chromosomal replication initiator protein DnaA.